A 685-amino-acid polypeptide reads, in one-letter code: DNA-directed RNA polymerase subunit beta' (685 aa).

Zn(2+)-binding residues include C69, C71, C87, and C90. Mg(2+) is bound by residues D489, D491, and D493.

It belongs to the RNA polymerase beta' chain family. RpoC1 subfamily. As to quaternary structure, in plastids the minimal PEP RNA polymerase catalytic core is composed of four subunits: alpha, beta, beta', and beta''. When a (nuclear-encoded) sigma factor is associated with the core the holoenzyme is formed, which can initiate transcription. Mg(2+) is required as a cofactor. Requires Zn(2+) as cofactor.

The protein resides in the plastid. It localises to the chloroplast. The enzyme catalyses RNA(n) + a ribonucleoside 5'-triphosphate = RNA(n+1) + diphosphate. Functionally, DNA-dependent RNA polymerase catalyzes the transcription of DNA into RNA using the four ribonucleoside triphosphates as substrates. The polypeptide is DNA-directed RNA polymerase subunit beta' (Gossypium hirsutum (Upland cotton)).